A 670-amino-acid polypeptide reads, in one-letter code: Kinesin-like protein KIF2B (670 aa).

Position 122 is a phosphothreonine; by PLK1 (Thr-122). A coiled-coil region spans residues 146 to 173; sequence CLQEIEKVQKQREKRRRLQQEIRARRAL. Ser-201 is subject to Phosphoserine; by PLK1. One can recognise a Kinesin motor domain in the interval 210–540; the sequence is RICVCVRKRP…LRYANRVKEL (331 aa). ATP is bound at residue 300 to 307; it reads GQTGSGKT.

The protein belongs to the TRAFAC class myosin-kinesin ATPase superfamily. Kinesin family. MCAK/KIF2 subfamily. Post-translationally, phosphorylation at Thr-122 by PLK1 is required for activity in the correction of kinetochore-microtubules attachment errors, while phosphorylation at Ser-201 also by PLK1 is required for the kinetochore localization and activity in prometaphase.

It localises to the cytoplasm. It is found in the cytoskeleton. Its subcellular location is the microtubule organizing center. The protein resides in the centrosome. The protein localises to the spindle. It localises to the chromosome. It is found in the centromere. Its subcellular location is the kinetochore. Plus end-directed microtubule-dependent motor required for spindle assembly and chromosome movement during mitosis. Has microtubule depolymerization activity. Plays a role in chromosome congression. This Macaca fascicularis (Crab-eating macaque) protein is Kinesin-like protein KIF2B (KIF2B).